The sequence spans 491 residues: Cysteine--tRNA ligase (491 aa).

Cys-31 is a binding site for Zn(2+). A 'HIGH' region motif is present at residues Pro-33–His-43. Residues Cys-226, His-251, and Glu-255 each coordinate Zn(2+). The short motif at Lys-283–Ser-287 is the 'KMSKS' region element. Lys-286 serves as a coordination point for ATP.

The protein belongs to the class-I aminoacyl-tRNA synthetase family. As to quaternary structure, monomer. The cofactor is Zn(2+).

The protein resides in the cytoplasm. It catalyses the reaction tRNA(Cys) + L-cysteine + ATP = L-cysteinyl-tRNA(Cys) + AMP + diphosphate. This Parabacteroides distasonis (strain ATCC 8503 / DSM 20701 / CIP 104284 / JCM 5825 / NCTC 11152) protein is Cysteine--tRNA ligase.